The following is a 154-amino-acid chain: 6,7-dimethyl-8-ribityllumazine synthase (154 aa).

Residues F15, T47–D49, and A71–I73 each bind 5-amino-6-(D-ribitylamino)uracil. A (2S)-2-hydroxy-3-oxobutyl phosphate-binding site is contributed by E76–T77. The Proton donor role is filled by H79. L104 contacts 5-amino-6-(D-ribitylamino)uracil. Residue R119 participates in (2S)-2-hydroxy-3-oxobutyl phosphate binding.

The protein belongs to the DMRL synthase family.

The enzyme catalyses (2S)-2-hydroxy-3-oxobutyl phosphate + 5-amino-6-(D-ribitylamino)uracil = 6,7-dimethyl-8-(1-D-ribityl)lumazine + phosphate + 2 H2O + H(+). The protein operates within cofactor biosynthesis; riboflavin biosynthesis; riboflavin from 2-hydroxy-3-oxobutyl phosphate and 5-amino-6-(D-ribitylamino)uracil: step 1/2. Catalyzes the formation of 6,7-dimethyl-8-ribityllumazine by condensation of 5-amino-6-(D-ribitylamino)uracil with 3,4-dihydroxy-2-butanone 4-phosphate. This is the penultimate step in the biosynthesis of riboflavin. This chain is 6,7-dimethyl-8-ribityllumazine synthase, found in Saccharolobus solfataricus (strain ATCC 35092 / DSM 1617 / JCM 11322 / P2) (Sulfolobus solfataricus).